A 312-amino-acid polypeptide reads, in one-letter code: MDIIFYHPTFDTQWWIEALHKAIPQARVRAWKSGDNESADYALVWHPPVEMLAGRDLKAVFALGAGVDSILSKLQAHPEMLKPSVPLFRLEDTGMGEQMQEYAVSQVLHWFRRFDDYRIQQNSSHWQPLPEYHREDFTIGILGAGVLGSKVAQSLQTWRFPLRCWSRTRKSWPGLQSFAGREELSAFLSQCRVLINLLPNTPETVGIINQQLLEKLPDGAYLLNLARGVHVVEDDLLAALDSGKVKGAMLDVFNREPLPPESPLWQHPRVTITPHVAAITRPAEAVDYISRTIAQLEKGERVCGQVDRARGY.

Residue Arg-227 is part of the active site. His-275 acts as the Proton donor in catalysis.

It belongs to the D-isomer specific 2-hydroxyacid dehydrogenase family. GhrA subfamily.

The protein resides in the cytoplasm. It carries out the reaction glycolate + NADP(+) = glyoxylate + NADPH + H(+). It catalyses the reaction (R)-glycerate + NAD(+) = 3-hydroxypyruvate + NADH + H(+). The enzyme catalyses (R)-glycerate + NADP(+) = 3-hydroxypyruvate + NADPH + H(+). Catalyzes the NADPH-dependent reduction of glyoxylate and hydroxypyruvate into glycolate and glycerate, respectively. The protein is Glyoxylate/hydroxypyruvate reductase A of Escherichia coli O81 (strain ED1a).